The sequence spans 233 residues: DNA-directed RNA polymerase V subunit 5C (233 aa).

The protein belongs to the archaeal Rpo5/eukaryotic RPB5 RNA polymerase subunit family. Component of the RNA polymerase V complex. Expressed in flower buds and siliques.

The protein resides in the nucleus. In terms of biological role, DNA-dependent RNA polymerase catalyzes the transcription of DNA into RNA using the four ribonucleoside triphosphates as substrates. Component of RNA polymerase V involved in RNA-directed DNA methylation-dependent (RdDM) silencing of endogenous repeated sequences, including transposable elements. The protein is DNA-directed RNA polymerase V subunit 5C (NRPE5C) of Arabidopsis thaliana (Mouse-ear cress).